Here is a 308-residue protein sequence, read N- to C-terminus: MEAGVGLALQSRAAGFGGSDRRRSALYGGEGRARIGSLRVAEPAVAKAAVWARGSKPVAPLRAKKSSGGHETLHNSVDEALLLKRKSEEVLFYLNGRCIYLVGMMGSGKSTVGKIMSEVLGYSFFDSDKLVEQAVGMPSVAQIFKVHSEAFFRDNESSVLRDLSSMKRLVVATGGGAVIRPVNWKYMKKGLSVWLDVPLDALARRIAKVGTASRPLLDQPSGDPYTMAFSKLSMLAEQRGDAYANADVRVSLEEIASKQGHDDVSKLTPTDIAIESFHKIENFVIEHTVDNPVGDSQADSRAQRIQTL.

The transit peptide at methionine 1–arginine 62 directs the protein to the chloroplast. Position 103 to 110 (glycine 103 to serine 110) interacts with ATP. Serine 110 lines the Mg(2+) pocket. Substrate is bound by residues aspartate 128, arginine 153, and glycine 175. Arginine 214 provides a ligand contact to ATP.

This sequence belongs to the shikimate kinase family. The cofactor is Mg(2+). As to expression, expressed in panicles.

The protein localises to the plastid. The protein resides in the chloroplast. The enzyme catalyses shikimate + ATP = 3-phosphoshikimate + ADP + H(+). It participates in metabolic intermediate biosynthesis; chorismate biosynthesis; chorismate from D-erythrose 4-phosphate and phosphoenolpyruvate: step 5/7. Its function is as follows. Catalyzes the specific phosphorylation of the 3-hydroxyl group of shikimic acid using ATP as a cosubstrate. The chain is Shikimate kinase 1, chloroplastic (SK1) from Oryza sativa subsp. japonica (Rice).